We begin with the raw amino-acid sequence, 1963 residues long: Immunoglobulin A1 protease (1963 aa).

An N-terminal signal peptide occupies residues 1-36 (MEKYFGEKQERFSFRKLSVGLVSATISSLFFMSVLA). The propeptide occupies 37-99 (SSSVDAQETA…QNQLAELPNT (63 aa)). An LPXTG sorting signal motif is present at residues 96–100 (LPNTG). Residue Thr-99 is modified to Pentaglycyl murein peptidoglycan amidated threonine. 2 helical membrane-spanning segments follow: residues 106 to 125 (QALVAGASLAALGILIFAVS) and 132 to 154 (KTVLHLVLVAGMGNGVLVSVHAL). Over 155-1963 (ENHLLLNYNT…FRSSIFENKK (1809 aa)) the chain is Extracellular. A disordered region spans residues 253–305 (KPFSTELINPRKEEKQSSDSQEQLAEHKNLETKKEEKISPKEKTGVNTLNPQD). The span at 276 to 296 (LAEHKNLETKKEEKISPKEKT) shows a compositional bias: basic and acidic residues. Residues 314 to 393 (KPELLYREET…PRIVEKGTKK (80 aa)) enclose the G5 domain. Residues 402-681 (ETGVEHKDVQ…GQTEPEKKLE (280 aa)) form a disordered region. A run of 3 repeats spans residues 419 to 435 (AIQPELPEAVVSDKGEP), 436 to 452 (EVQPTLPEAVVTDKGET), and 453 to 469 (EVQPESPDTVVSDKGEP). Residues 419–469 (AIQPELPEAVVSDKGEPEVQPTLPEAVVTDKGETEVQPESPDTVVSDKGEP) are 3 X 17 AA approximate tandem repeats. Residues 485-511 (VKPETPVEKTKEQGPEKTEEVPVKPTE) are compositionally biased toward basic and acidic residues. 2 stretches are compositionally biased toward polar residues: residues 516–529 (NPNEGTTEGTSIQE) and 538–572 (EESTTNSEKVSPDTSSENTGEVSSNPSDSTTSVGE). The span at 574-591 (NKPEHNDSKNENSEKTVE) shows a compositional bias: basic and acidic residues. 2 stretches are compositionally biased toward polar residues: residues 618 to 639 (EETQTNSGKIANENTGEVSNKP) and 648 to 674 (ESNQPEKNGTATKPENSGNTTSENGQT). His-1604 contacts Zn(2+). Glu-1605 is a catalytic residue. Zn(2+)-binding residues include His-1608 and Glu-1628.

The protein belongs to the peptidase M26 family. It depends on Zn(2+) as a cofactor. In terms of processing, the Gram-positive cell-wall anchor motif LPXTG is located in the N-terminal part, in contrast to such motifs in other known streptococcal and staphylococcal proteins. The protease could be cleaved by the sortase and anchored in the membrane via the two potential N-terminal transmembrane domains, whereas the propeptide located prior to the LPXTG motif would remain attached to the cell wall peptidoglycan by an amide bond.

Its subcellular location is the secreted. It localises to the cell wall. The protein resides in the membrane. It carries out the reaction Cleavage of Pro-|-Thr bond in the hinge region of the heavy chain of human IgA.. Zinc metalloproteinase which cleaves human immunoglobulin A1 (IgA1) in the hinge region. The polypeptide is Immunoglobulin A1 protease (iga) (Streptococcus pneumoniae (strain ATCC BAA-255 / R6)).